A 38-amino-acid polypeptide reads, in one-letter code: Large ribosomal subunit protein bL36 (38 aa).

Belongs to the bacterial ribosomal protein bL36 family.

This Psychrobacter arcticus (strain DSM 17307 / VKM B-2377 / 273-4) protein is Large ribosomal subunit protein bL36.